The primary structure comprises 436 residues: Nicotinate phosphoribosyltransferase (436 aa).

Phosphohistidine; by autocatalysis is present on histidine 231.

Belongs to the NAPRTase family. In terms of processing, transiently phosphorylated on a His residue during the reaction cycle. Phosphorylation strongly increases the affinity for substrates and increases the rate of nicotinate D-ribonucleotide production. Dephosphorylation regenerates the low-affinity form of the enzyme, leading to product release.

The catalysed reaction is nicotinate + 5-phospho-alpha-D-ribose 1-diphosphate + ATP + H2O = nicotinate beta-D-ribonucleotide + ADP + phosphate + diphosphate. The protein operates within cofactor biosynthesis; NAD(+) biosynthesis; nicotinate D-ribonucleotide from nicotinate: step 1/1. Catalyzes the synthesis of beta-nicotinate D-ribonucleotide from nicotinate and 5-phospho-D-ribose 1-phosphate at the expense of ATP. The chain is Nicotinate phosphoribosyltransferase from Vibrio campbellii (strain ATCC BAA-1116).